Here is a 43-residue protein sequence, read N- to C-terminus: Protein PsbN (43 aa).

Residues 7–27 form a helical membrane-spanning segment; the sequence is LIVFIASLLLGVTGYSVYTAF.

The protein belongs to the PsbN family.

It is found in the plastid. The protein localises to the chloroplast thylakoid membrane. May play a role in photosystem I and II biogenesis. This Rhodomonas salina (Cryptomonas salina) protein is Protein PsbN.